The chain runs to 238 residues: Small heat shock protein, chloroplastic (238 aa).

The disordered stretch occupies residues 31–87 (APLSTGGRTRPLSVASAAQENRDNSVDVQVSQAQNAGNQQGNAVQRRPRRAGFDISP). The segment covering 58–75 (VQVSQAQNAGNQQGNAVQ) has biased composition (low complexity). Residues 124–238 (AARARRRMPW…ERKVIDVQVQ (115 aa)) form the sHSP domain.

It belongs to the small heat shock protein (HSP20) family.

The protein localises to the plastid. The protein resides in the chloroplast. This is Small heat shock protein, chloroplastic (HSP21) from Triticum aestivum (Wheat).